The chain runs to 664 residues: Intraflagellar transport protein 70A1 (664 aa).

7 TPR repeats span residues 11–44 (DGEFTAVVYRLIRDSRYSEAVQLLSAELQRSSRS), 45–78 (RAGLSLLAYCYYRLQEFELAAECYEQLSQMHPEL), 153–186 (PDGLVNMGCLLYKEGHYEAACSKFLAALQASGYQ), 188–220 (DLSYNLALAYYSSRQYAPALKHIADIIERGIRQ), 393–423 (TKQVQEARHNRDDEIIKKAMNEYDETLEKYI), 424–456 (PVLMAQAKIYWNLENYPMVEKIFRKSVEFCNDH), and 458–491 (VWKLNVAHVLFMQENKYKEAIGFYEPIVKKNYDN). The stretch at 507 to 534 (YIMTSQNEEAEELMRKIEKEEEQLSYGD) forms a coiled coil. One copy of the TPR 8 repeat lies at 543–576 (CIVNLVIGTLYCAKGNYDFGISRVIKSLEPYHKK).

Belongs to the TTC30/dfy-1/fleer family. In terms of assembly, interacts wit the IFT B complex component IFT52.

Its subcellular location is the cell projection. The protein resides in the cilium. Functionally, required for polyglutamylation of axonemal tubulin. Plays a role in anterograde intraflagellar transport (IFT), the process by which cilia precursors are transported from the base of the cilium to the site of their incorporation at the tip. The sequence is that of Intraflagellar transport protein 70A1 (Ift70a1) from Mus musculus (Mouse).